The chain runs to 262 residues: Homeobox protein vent1 (262 aa).

2 stretches are compositionally biased toward basic and acidic residues: residues 16–26 and 44–55; these read REEAPDGKDSV and YAKEIPRRKDGQ. The interval 16–129 is disordered; the sequence is REEAPDGKDS…KSPKSDLQRR (114 aa). Residues 58–79 show a composition bias toward polar residues; the sequence is GEITSFQCSSEEARNRQFSNPS. The span at 114–128 shows a compositional bias: basic and acidic residues; that stretch reads DTEHRSKSPKSDLQR. The homeobox DNA-binding region spans 127 to 186; it reads QRRLRTAFTPQQITRLEQAFNKQRYLGASERKKLATSLQLSEIQVKTWFQNRRMKLKRQI.

The protein resides in the nucleus. Functionally, transcriptional repressor. Cooperates with vent2 in a ventral signaling pathway downstream of bmp4, which antagonizes the Spemann organizer and dorsal mesoderm formation, and leads to ventral mesoderm formation. Acts downstream of bmp4 to repress transcription of foxa4-B/XFD-1'. Binds to DNA with preference for the target sequence 5'-CTATT[T/C]G-3'. Also binds 5'-TGCATTTTG-3' at a lower frequency, and occasionally 5'-TTGATC-3'. Binds to the homeobox 2 (HBX2) repressor element in the promoter of the myf5 gene. Cooperates with vent2 to repress myf5 expression in the ventral domain. This is Homeobox protein vent1 from Xenopus tropicalis (Western clawed frog).